We begin with the raw amino-acid sequence, 307 residues long: HPr kinase/phosphorylase (307 aa).

Catalysis depends on residues H136 and K157. 151–158 lines the ATP pocket; sequence GESGIGKS. S158 lines the Mg(2+) pocket. The active-site Proton acceptor; for phosphorylation activity. Proton donor; for dephosphorylation activity is the D175. An important for the catalytic mechanism of both phosphorylation and dephosphorylation region spans residues 198-207; that stretch reads LEVRGMGIID. E199 contacts Mg(2+). The active site involves R240. Residues 261-266 are important for the catalytic mechanism of dephosphorylation; that stretch reads PIRPGR.

This sequence belongs to the HPrK/P family. In terms of assembly, homohexamer. Mg(2+) serves as cofactor.

The enzyme catalyses [HPr protein]-L-serine + ATP = [HPr protein]-O-phospho-L-serine + ADP + H(+). It carries out the reaction [HPr protein]-O-phospho-L-serine + phosphate + H(+) = [HPr protein]-L-serine + diphosphate. In terms of biological role, catalyzes the ATP- as well as the pyrophosphate-dependent phosphorylation of a specific serine residue in HPr, a phosphocarrier protein of the phosphoenolpyruvate-dependent sugar phosphotransferase system (PTS). HprK/P also catalyzes the pyrophosphate-producing, inorganic phosphate-dependent dephosphorylation (phosphorolysis) of seryl-phosphorylated HPr (P-Ser-HPr). The two antagonistic activities of HprK/P are regulated by several intracellular metabolites, which change their concentration in response to the absence or presence of rapidly metabolisable carbon sources (glucose, fructose, etc.) in the growth medium. Therefore, by controlling the phosphorylation state of HPr, HPrK/P is a sensor enzyme that plays a major role in the regulation of carbon metabolism and sugar transport: it mediates carbon catabolite repression (CCR), and regulates PTS-catalyzed carbohydrate uptake and inducer exclusion. The polypeptide is HPr kinase/phosphorylase (Clostridium perfringens (strain ATCC 13124 / DSM 756 / JCM 1290 / NCIMB 6125 / NCTC 8237 / Type A)).